A 676-amino-acid chain; its full sequence is Lon-like protease BrxL (676 aa).

The protein belongs to the BrxL family.

Its function is as follows. BREX systems (bacteriophage exclusion) provide immunity against bacteriophage. Part of a type 1 BREX system. This system allows phage adsorption but prevents phage DNA replication, without degradation of the phage DNA. Methylation of bacterial DNA by PglX probably guides self/non-self discrimination. When the brxA-brxB-brxC-pglX and pglZ-brxL operons are transformed into a susceptible B.subtilis strain (BEST7003) they confer resistance to bacteriophages SPbeta, SP16, Zeta, phi3T and SP02 and partial protection to phages SP01 and SP82G (these include lytic and temperate phage). They do not protect against phages phi105, rho10 or rho14. Additionally confers a very slight reduction in efficiency of plasmid transformation. This chain is Lon-like protease BrxL, found in Bacillus cereus (strain H3081.97).